A 62-amino-acid chain; its full sequence is DNA-binding protein 7 (62 aa).

The protein belongs to the 7 kDa DNA-binding/endoribonuclease P2 family. As to quaternary structure, monomer.

The protein localises to the cytoplasm. Can constrain negative DNA supercoils. May be involved in maintaining the integrity of the genome at high temperature. The chain is DNA-binding protein 7 from Metallosphaera cuprina (strain Ar-4).